Consider the following 432-residue polypeptide: Transcriptional adapter 3 (432 aa).

Lys-21 participates in a covalent cross-link: Glycyl lysine isopeptide (Lys-Gly) (interchain with G-Cter in SUMO2). The stretch at 40–69 (IEELDTLQLELETLLSSASRRLRVLEAETQ) forms a coiled coil. The disordered stretch occupies residues 87-126 (GRDHELGAPPKHGKPKKQKLEGKAGHGPGPGPGRPKSKNL). Lys-129 participates in a covalent cross-link: Glycyl lysine isopeptide (Lys-Gly) (interchain with G-Cter in SUMO2). The disordered stretch occupies residues 272–319 (NIISPMEDSPIPDMSGKESGADGASTSPRNQNKPFSVPHTKSLESRIK). Phosphoserine occurs at positions 280 and 298. The span at 295–305 (ASTSPRNQNKP) shows a compositional bias: polar residues. Residues 367–407 (LLRLAKEEVSRQELRQRVRMADNEVMDAFRKIMAARQKKRT) are a coiled coil. The residue at position 418 (Lys-418) is an N6-acetyllysine.

Belongs to the NGG1 family. The PCAF complex is composed of a number of TBP-associated factors (TAFS), such as TAF5, TAF5L, TAF6, TAF6L, TAF9, TAF10 and TAF12, PCAF, and also PCAF-associated factors (PAFs), such as TADA2L/ADA2, TADA3L/ADA3 and SPT3. Interacts directly with TADA2L and PCAF and also with the high-risk HPV oncoprotein E6. Component of the STAGA transcription coactivator-HAT complex, at least composed of SUPT3H, GCN5L2, TAF5L, TAF6L, SUPT7L, TADA3L, TAD1L, TAF10, TAF12, TRRAP and TAF9. Component of the TFTC-HAT complex. Component of the ADA2A-containing complex (ATAC), composed of KAT14, KAT2A, TADA2L, TADA3L, ZZ3, MBIP, WDR5, YEATS2, CCDC101 and DR1. Ubiquitously expressed.

Its subcellular location is the nucleus. Functions as a component of the PCAF complex. The PCAF complex is capable of efficiently acetylating histones in a nucleosomal context. The PCAF complex could be considered as the human version of the yeast SAGA complex. Also known as a coactivator for p53/TP53-dependent transcriptional activation. Component of the ATAC complex, a complex with histone acetyltransferase activity on histones H3 and H4. The chain is Transcriptional adapter 3 (TADA3) from Homo sapiens (Human).